The chain runs to 173 residues: Ribosome maturation factor RimM (173 aa).

The PRC barrel domain maps to 93-166 (EDEYLVSDMI…KMLVDTIEGM (74 aa)).

It belongs to the RimM family. Binds ribosomal protein uS19.

It localises to the cytoplasm. Its function is as follows. An accessory protein needed during the final step in the assembly of 30S ribosomal subunit, possibly for assembly of the head region. Essential for efficient processing of 16S rRNA. May be needed both before and after RbfA during the maturation of 16S rRNA. It has affinity for free ribosomal 30S subunits but not for 70S ribosomes. The polypeptide is Ribosome maturation factor RimM (Fusobacterium nucleatum subsp. nucleatum (strain ATCC 25586 / DSM 15643 / BCRC 10681 / CIP 101130 / JCM 8532 / KCTC 2640 / LMG 13131 / VPI 4355)).